A 98-amino-acid chain; its full sequence is Putative pterin-4-alpha-carbinolamine dehydratase (98 aa).

Belongs to the pterin-4-alpha-carbinolamine dehydratase family.

It carries out the reaction (4aS,6R)-4a-hydroxy-L-erythro-5,6,7,8-tetrahydrobiopterin = (6R)-L-erythro-6,7-dihydrobiopterin + H2O. This Mesorhizobium japonicum (strain LMG 29417 / CECT 9101 / MAFF 303099) (Mesorhizobium loti (strain MAFF 303099)) protein is Putative pterin-4-alpha-carbinolamine dehydratase.